The following is a 92-amino-acid chain: Trp operon repressor homolog (92 aa).

The DNA-binding element occupies 56–79 (QREVASKLGVSITKITRGAANLQD).

It belongs to the TrpR family. In terms of assembly, homodimer.

It localises to the cytoplasm. Its function is as follows. This protein is an aporepressor. When complexed with L-tryptophan it binds the operator region of the trp operon and prevents the initiation of transcription. The protein is Trp operon repressor homolog of Xylella fastidiosa (strain M23).